We begin with the raw amino-acid sequence, 597 residues long: Putative diflavin flavoprotein A 3 (597 aa).

A zinc metallo-hydrolase region spans residues 59–254; the sequence is QRGTTANSYL…YPAQTYAPSH (196 aa). Residues 283–421 enclose the Flavodoxin-like domain; it reads VALIYASAYG…MCEEAGTDFA (139 aa). The segment at 449–597 is flavodoxin-reductase-like; it reads LGRLVGSLCV…VHHRKSGDHY (149 aa).

It in the N-terminal section; belongs to the zinc metallo-hydrolase group 3 family. In the C-terminal section; belongs to the flavodoxin reductase family. Fe cation serves as cofactor.

Mediates electron transfer from NADH to oxygen, reducing it to water. This modular protein has 3 redox cofactors, in other organisms the same activity requires 2 or 3 proteins. This is Putative diflavin flavoprotein A 3 (dfa3) from Synechocystis sp. (strain ATCC 27184 / PCC 6803 / Kazusa).